The chain runs to 393 residues: S-adenosylmethionine synthase (393 aa).

Glu-9 is a binding site for Mg(2+). Position 15 (His-15) interacts with ATP. Residue Glu-43 participates in K(+) binding. 2 residues coordinate L-methionine: Glu-56 and Gln-99. ATP contacts are provided by residues Asp-167 to Lys-169, Ser-235 to Phe-238, Asp-246, Arg-252 to Lys-253, Ala-269, Lys-273, and Lys-277. Residue Asp-246 participates in L-methionine binding. Lys-277 is a binding site for L-methionine.

It belongs to the AdoMet synthase family. As to quaternary structure, homotetramer. The cofactor is Mn(2+). Mg(2+) is required as a cofactor. Co(2+) serves as cofactor. Requires K(+) as cofactor.

It is found in the cytoplasm. It catalyses the reaction L-methionine + ATP + H2O = S-adenosyl-L-methionine + phosphate + diphosphate. It participates in amino-acid biosynthesis; S-adenosyl-L-methionine biosynthesis; S-adenosyl-L-methionine from L-methionine: step 1/1. Catalyzes the formation of S-adenosylmethionine from methionine and ATP. The reaction comprises two steps that are both catalyzed by the same enzyme: formation of S-adenosylmethionine (AdoMet) and triphosphate, and subsequent hydrolysis of the triphosphate. In Solanum palustre (Non-tuber-performing potato), this protein is S-adenosylmethionine synthase (SAMS).